We begin with the raw amino-acid sequence, 366 residues long: Pyrimidine monooxygenase RutA (366 aa).

Residues 49–50 (IK), Asn115, Glu124, 140–141 (RY), and Ser190 each bind FMN.

This sequence belongs to the NtaA/SnaA/DszA monooxygenase family. RutA subfamily.

The enzyme catalyses uracil + FMNH2 + NADH + O2 = (Z)-3-ureidoacrylate + FMN + NAD(+) + H2O + H(+). It carries out the reaction thymine + FMNH2 + NADH + O2 = (Z)-2-methylureidoacrylate + FMN + NAD(+) + H2O + H(+). In terms of biological role, catalyzes the pyrimidine ring opening between N-3 and C-4 by an unusual flavin hydroperoxide-catalyzed mechanism, adding oxygen atoms in the process to yield ureidoacrylate peracid, that immediately reacts with FMN forming ureidoacrylate and FMN-N(5)-oxide. The FMN-N(5)-oxide reacts spontaneously with NADH to produce FMN. Requires the flavin reductase RutF to regenerate FMN in vivo. In Serratia proteamaculans (strain 568), this protein is Pyrimidine monooxygenase RutA.